A 269-amino-acid polypeptide reads, in one-letter code: GTP cyclohydrolase FolE2 1 (269 aa).

Belongs to the GTP cyclohydrolase IV family.

The catalysed reaction is GTP + H2O = 7,8-dihydroneopterin 3'-triphosphate + formate + H(+). Its pathway is cofactor biosynthesis; 7,8-dihydroneopterin triphosphate biosynthesis; 7,8-dihydroneopterin triphosphate from GTP: step 1/1. Functionally, converts GTP to 7,8-dihydroneopterin triphosphate. The sequence is that of GTP cyclohydrolase FolE2 1 from Burkholderia cenocepacia (strain HI2424).